We begin with the raw amino-acid sequence, 186 residues long: Akirin-1A (186 aa).

The segment at 14-65 is disordered; the sequence is EALMSPQSPKRRRCAPLPGSPATPSPQRCAIRPEMQQGQQQPLSQLGGDRRL. A compositionally biased stretch (low complexity) spans 49-60; that stretch reads QQGQQQPLSQLG. An SYVS motif motif is present at residues 183 to 186; sequence SYVS.

Belongs to the akirin family.

It is found in the nucleus. Functionally, molecular adapter that acts as a bridge between proteins, and which is involved skeletal muscle development. Functions as a signal transducer for MSTN during skeletal muscle regeneration and myogenesis. In Xenopus laevis (African clawed frog), this protein is Akirin-1A (akirin1-a).